The following is a 341-amino-acid chain: Holliday junction branch migration complex subunit RuvB (341 aa).

Residues 1–182 (MKDRLISAVA…FGVISRLEYY (182 aa)) form a large ATPase domain (RuvB-L) region. ATP-binding positions include Leu21, Arg22, Gly63, Lys66, Thr67, Thr68, 129–131 (EDY), Arg172, Tyr182, and Arg219. Thr67 serves as a coordination point for Mg(2+). Residues 183–253 (RPEDLVLIVN…VAVEALKFLE (71 aa)) form a small ATPAse domain (RuvB-S) region. Residues 256–341 (PLGLDFADRR…REETDQVSLW (86 aa)) are head domain (RuvB-H). DNA is bound by residues Arg311 and Arg316.

This sequence belongs to the RuvB family. As to quaternary structure, homohexamer. Forms an RuvA(8)-RuvB(12)-Holliday junction (HJ) complex. HJ DNA is sandwiched between 2 RuvA tetramers; dsDNA enters through RuvA and exits via RuvB. An RuvB hexamer assembles on each DNA strand where it exits the tetramer. Each RuvB hexamer is contacted by two RuvA subunits (via domain III) on 2 adjacent RuvB subunits; this complex drives branch migration. In the full resolvosome a probable DNA-RuvA(4)-RuvB(12)-RuvC(2) complex forms which resolves the HJ.

It is found in the cytoplasm. The enzyme catalyses ATP + H2O = ADP + phosphate + H(+). The RuvA-RuvB-RuvC complex processes Holliday junction (HJ) DNA during genetic recombination and DNA repair, while the RuvA-RuvB complex plays an important role in the rescue of blocked DNA replication forks via replication fork reversal (RFR). RuvA specifically binds to HJ cruciform DNA, conferring on it an open structure. The RuvB hexamer acts as an ATP-dependent pump, pulling dsDNA into and through the RuvAB complex. RuvB forms 2 homohexamers on either side of HJ DNA bound by 1 or 2 RuvA tetramers; 4 subunits per hexamer contact DNA at a time. Coordinated motions by a converter formed by DNA-disengaged RuvB subunits stimulates ATP hydrolysis and nucleotide exchange. Immobilization of the converter enables RuvB to convert the ATP-contained energy into a lever motion, pulling 2 nucleotides of DNA out of the RuvA tetramer per ATP hydrolyzed, thus driving DNA branch migration. The RuvB motors rotate together with the DNA substrate, which together with the progressing nucleotide cycle form the mechanistic basis for DNA recombination by continuous HJ branch migration. Branch migration allows RuvC to scan DNA until it finds its consensus sequence, where it cleaves and resolves cruciform DNA. This Pelotomaculum thermopropionicum (strain DSM 13744 / JCM 10971 / SI) protein is Holliday junction branch migration complex subunit RuvB.